A 94-amino-acid polypeptide reads, in one-letter code: Protein translocase subunit SecE (94 aa).

The disordered stretch occupies residues 1–32; sequence MTDAVGSIDMPDAQDEAPDSKKSRKGGKRGKK. Positions 22–32 are enriched in basic residues; that stretch reads KSRKGGKRGKK. Residues 65–85 traverse the membrane as a helical segment; the sequence is TVVIIFVVIMIGLVTLIDYGF.

Belongs to the SecE/SEC61-gamma family. In terms of assembly, component of the Sec protein translocase complex. Heterotrimer consisting of SecY, SecE and SecG subunits. The heterotrimers can form oligomers, although 1 heterotrimer is thought to be able to translocate proteins. Interacts with the ribosome. Interacts with SecDF, and other proteins may be involved. Interacts with SecA.

Its subcellular location is the cell membrane. Functionally, essential subunit of the Sec protein translocation channel SecYEG. Clamps together the 2 halves of SecY. May contact the channel plug during translocation. The protein is Protein translocase subunit SecE of Streptomyces coelicolor (strain ATCC BAA-471 / A3(2) / M145).